An 82-amino-acid chain; its full sequence is Large ribosomal subunit protein bL31B (82 aa).

The protein belongs to the bacterial ribosomal protein bL31 family. Type B subfamily. As to quaternary structure, part of the 50S ribosomal subunit.

The protein is Large ribosomal subunit protein bL31B of Dichelobacter nodosus (strain VCS1703A).